A 184-amino-acid polypeptide reads, in one-letter code: 1,6-anhydro-N-acetylmuramyl-L-alanine amidase AmpD (184 aa).

Residues 30-171 (QDISLLVIHY…ISPKRKIDPG (142 aa)) form the N-acetylmuramoyl-L-alanine amidase domain. Residue histidine 38 coordinates Zn(2+). The active-site Proton acceptor is glutamate 120. Zn(2+)-binding residues include histidine 159 and aspartate 169.

The protein belongs to the N-acetylmuramoyl-L-alanine amidase 2 family. It depends on Zn(2+) as a cofactor.

Its subcellular location is the cytoplasm. It carries out the reaction Hydrolyzes the link between N-acetylmuramoyl residues and L-amino acid residues in certain cell-wall glycopeptides.. In terms of biological role, involved in cell wall peptidoglycan recycling. Specifically cleaves the amide bond between the lactyl group of N-acetylmuramic acid and the alpha-amino group of the L-alanine in degradation products containing an anhydro N-acetylmuramyl moiety. This chain is 1,6-anhydro-N-acetylmuramyl-L-alanine amidase AmpD (ampD), found in Haemophilus influenzae (strain ATCC 51907 / DSM 11121 / KW20 / Rd).